Here is a 185-residue protein sequence, read N- to C-terminus: Ribosome-recycling factor (185 aa).

This sequence belongs to the RRF family.

The protein localises to the cytoplasm. Functionally, responsible for the release of ribosomes from messenger RNA at the termination of protein biosynthesis. May increase the efficiency of translation by recycling ribosomes from one round of translation to another. The chain is Ribosome-recycling factor from Helicobacter hepaticus (strain ATCC 51449 / 3B1).